Reading from the N-terminus, the 455-residue chain is D-inositol 3-phosphate glycosyltransferase (455 aa).

The segment at 1-25 (MSQHVSRLGGLRGRSHGHGAFGGPY) is disordered. Residue H45 coordinates 1D-myo-inositol 3-phosphate. Residues 51–52 (QP) and G59 contribute to the UDP-N-acetyl-alpha-D-glucosamine site. 1D-myo-inositol 3-phosphate contacts are provided by residues 56–61 (DAGGMN), K114, Y147, T171, and R191. UDP-N-acetyl-alpha-D-glucosamine-binding residues include R266 and K271. 3 residues coordinate Mg(2+): Y341, R342, and A344. E354 and E362 together coordinate UDP-N-acetyl-alpha-D-glucosamine. A Mg(2+)-binding site is contributed by T368.

Belongs to the glycosyltransferase group 1 family. MshA subfamily. In terms of assembly, homodimer.

It carries out the reaction 1D-myo-inositol 3-phosphate + UDP-N-acetyl-alpha-D-glucosamine = 1D-myo-inositol 2-acetamido-2-deoxy-alpha-D-glucopyranoside 3-phosphate + UDP + H(+). Functionally, catalyzes the transfer of a N-acetyl-glucosamine moiety to 1D-myo-inositol 3-phosphate to produce 1D-myo-inositol 2-acetamido-2-deoxy-glucopyranoside 3-phosphate in the mycothiol biosynthesis pathway. In Streptomyces bingchenggensis (strain BCW-1), this protein is D-inositol 3-phosphate glycosyltransferase.